The following is a 245-amino-acid chain: Cysteine-rich secretory protein 3 (245 aa).

Positions 1–22 (MALLPVLLFLAAVLLPFFPASG) are cleaved as a signal peptide. Residues 42 to 171 (VNKHNDLRRT…TLKYYYVCQY (130 aa)) enclose the SCP domain. Disulfide bonds link Cys-191–Cys-198, Cys-194–Cys-203, Cys-207–Cys-240, Cys-216–Cys-234, and Cys-225–Cys-238. Positions 207-240 (CEYEDLVSNCDSLKKIAGCEHELLKENCKTTCQC) constitute a ShKT domain.

It belongs to the CRISP family. As to quaternary structure, interacts with A1BG. Expressed in the salivary gland, in the ampulla and the seminal vesicle.

Its subcellular location is the secreted. The protein is Cysteine-rich secretory protein 3 (CRISP3) of Equus caballus (Horse).